Here is a 780-residue protein sequence, read N- to C-terminus: Mediator of RNA polymerase II transcription subunit 15 (780 aa).

The segment at 1-124 is interaction with nhr-49; the sequence is MSEEDWPSPK…PQPTSAQARN (124 aa). The segment at 2–96 is interaction with sbp-1; the sequence is SEEDWPSPKF…SPPCTTAALL (95 aa). 3 disordered regions span residues 91-152, 166-363, and 564-597; these read TTAA…APSA, PSPD…QGMM, and GPGP…GTPN. Over residues 125–139 the composition is skewed to low complexity; sequence PPVTVATTQASTTPS. The span at 225 to 245 shows a compositional bias: gly residues; that stretch reads PPNGYGGYGMMNGPPGSGAPM. The span at 296–316 shows a compositional bias: polar residues; sequence QGATPTGPSSVLESLINQPQQ. 2 stretches are compositionally biased toward low complexity: residues 333 to 353 and 574 to 594; these read AAQR…QQQR and SMSG…NPMG.

It belongs to the Mediator complex subunit 15 family. As to quaternary structure, component of the Mediator complex. Interacts with nhr-49, nhr-64 and sbp-1. As to expression, expressed in the intestine and head neurons.

It is found in the nucleus. Functionally, component of the Mediator complex, a coactivator involved in regulated gene transcription of nearly all RNA polymerase II-dependent genes. Mediator functions as a bridge to convey information from gene-specific regulatory proteins to the basal RNA polymerase II transcription machinery. Mediator is recruited to promoters by direct interactions with regulatory proteins and serves as a scaffold for the assembly of a functional preinitiation complex with RNA polymerase II and the general transcription factors. Required for regulated expression of genes controlling fatty acid desaturation by transcription factors including sbp-1 and nhr-49. Involved in the response to simulated microgravity, in concert with sbp-1, probably acting in the intestine. This is Mediator of RNA polymerase II transcription subunit 15 (mdt-15) from Caenorhabditis elegans.